Consider the following 398-residue polypeptide: Carbamoyl phosphate synthase small chain (398 aa).

The tract at residues 1–207 (MIQTISSSRP…KGYGTNNVHN (207 aa)) is CPSase. Residues S60, G257, and G259 each coordinate L-glutamine. The region spanning 209 to 397 (HIVAIDYGIK…CDLIMNHKKI (189 aa)) is the Glutamine amidotransferase type-1 domain. C286 (nucleophile) is an active-site residue. L287, Q290, N328, G330, and F331 together coordinate L-glutamine. Catalysis depends on residues H370 and E372.

This sequence belongs to the CarA family. As to quaternary structure, composed of two chains; the small (or glutamine) chain promotes the hydrolysis of glutamine to ammonia, which is used by the large (or ammonia) chain to synthesize carbamoyl phosphate. Tetramer of heterodimers (alpha,beta)4.

The catalysed reaction is hydrogencarbonate + L-glutamine + 2 ATP + H2O = carbamoyl phosphate + L-glutamate + 2 ADP + phosphate + 2 H(+). The enzyme catalyses L-glutamine + H2O = L-glutamate + NH4(+). It participates in amino-acid biosynthesis; L-arginine biosynthesis; carbamoyl phosphate from bicarbonate: step 1/1. The protein operates within pyrimidine metabolism; UMP biosynthesis via de novo pathway; (S)-dihydroorotate from bicarbonate: step 1/3. Its function is as follows. Small subunit of the glutamine-dependent carbamoyl phosphate synthetase (CPSase). CPSase catalyzes the formation of carbamoyl phosphate from the ammonia moiety of glutamine, carbonate, and phosphate donated by ATP, constituting the first step of 2 biosynthetic pathways, one leading to arginine and/or urea and the other to pyrimidine nucleotides. The small subunit (glutamine amidotransferase) binds and cleaves glutamine to supply the large subunit with the substrate ammonia. This Bartonella tribocorum (strain CIP 105476 / IBS 506) protein is Carbamoyl phosphate synthase small chain.